A 290-amino-acid polypeptide reads, in one-letter code: Shikimate dehydrogenase (NADP(+)) (290 aa).

Shikimate is bound by residues 22 to 24 (SLS) and threonine 68. The active-site Proton acceptor is the lysine 72. Residue aspartate 84 coordinates NADP(+). Shikimate-binding residues include asparagine 93 and aspartate 108. NADP(+)-binding positions include 133 to 137 (GSGGS) and isoleucine 228. Tyrosine 230 lines the shikimate pocket. Glycine 251 is a binding site for NADP(+).

The protein belongs to the shikimate dehydrogenase family. Homodimer.

The enzyme catalyses shikimate + NADP(+) = 3-dehydroshikimate + NADPH + H(+). Its pathway is metabolic intermediate biosynthesis; chorismate biosynthesis; chorismate from D-erythrose 4-phosphate and phosphoenolpyruvate: step 4/7. Its function is as follows. Involved in the biosynthesis of the chorismate, which leads to the biosynthesis of aromatic amino acids. Catalyzes the reversible NADPH linked reduction of 3-dehydroshikimate (DHSA) to yield shikimate (SA). The chain is Shikimate dehydrogenase (NADP(+)) from Leptospira interrogans serogroup Icterohaemorrhagiae serovar Lai (strain 56601).